Here is a 463-residue protein sequence, read N- to C-terminus: Fumarate hydratase class II (463 aa).

Substrate is bound by residues 98–100, 129–132, 139–141, and Thr-187; these read SGT, HPND, and SSN. Residue His-188 is the Proton donor/acceptor of the active site. Residue Ser-318 is part of the active site. Substrate contacts are provided by residues Ser-319 and 324–326; that span reads KVN.

Belongs to the class-II fumarase/aspartase family. Fumarase subfamily. As to quaternary structure, homotetramer.

The protein localises to the cytoplasm. It catalyses the reaction (S)-malate = fumarate + H2O. It functions in the pathway carbohydrate metabolism; tricarboxylic acid cycle; (S)-malate from fumarate: step 1/1. Its function is as follows. Involved in the TCA cycle. Catalyzes the stereospecific interconversion of fumarate to L-malate. The chain is Fumarate hydratase class II from Rhizobium meliloti (strain 1021) (Ensifer meliloti).